Here is a 340-residue protein sequence, read N- to C-terminus: Ferrochelatase (340 aa).

Positions 189 and 292 each coordinate Fe cation.

This sequence belongs to the ferrochelatase family.

Its subcellular location is the cytoplasm. It catalyses the reaction heme b + 2 H(+) = protoporphyrin IX + Fe(2+). It functions in the pathway porphyrin-containing compound metabolism; protoheme biosynthesis; protoheme from protoporphyrin-IX: step 1/1. Its function is as follows. Catalyzes the ferrous insertion into protoporphyrin IX. In Ectopseudomonas mendocina (strain ymp) (Pseudomonas mendocina), this protein is Ferrochelatase.